The primary structure comprises 288 residues: 33 kDa chaperonin (288 aa).

Cystine bridges form between Cys-237–Cys-239 and Cys-270–Cys-273.

The protein belongs to the HSP33 family. In terms of processing, under oxidizing conditions two disulfide bonds are formed involving the reactive cysteines. Under reducing conditions zinc is bound to the reactive cysteines and the protein is inactive.

Its subcellular location is the cytoplasm. Its function is as follows. Redox regulated molecular chaperone. Protects both thermally unfolding and oxidatively damaged proteins from irreversible aggregation. Plays an important role in the bacterial defense system toward oxidative stress. This Agathobacter rectalis (strain ATCC 33656 / DSM 3377 / JCM 17463 / KCTC 5835 / VPI 0990) (Eubacterium rectale) protein is 33 kDa chaperonin.